Consider the following 433-residue polypeptide: Serine--tRNA ligase (433 aa).

236 to 238 provides a ligand contact to L-serine; it reads TAE. Residue 267 to 269 participates in ATP binding; the sequence is RSE. Position 290 (glutamate 290) interacts with L-serine. 354–357 lines the ATP pocket; the sequence is EISS. Serine 394 provides a ligand contact to L-serine.

The protein belongs to the class-II aminoacyl-tRNA synthetase family. Type-1 seryl-tRNA synthetase subfamily. Homodimer. The tRNA molecule binds across the dimer.

It is found in the cytoplasm. The enzyme catalyses tRNA(Ser) + L-serine + ATP = L-seryl-tRNA(Ser) + AMP + diphosphate + H(+). It carries out the reaction tRNA(Sec) + L-serine + ATP = L-seryl-tRNA(Sec) + AMP + diphosphate + H(+). Its pathway is aminoacyl-tRNA biosynthesis; selenocysteinyl-tRNA(Sec) biosynthesis; L-seryl-tRNA(Sec) from L-serine and tRNA(Sec): step 1/1. Catalyzes the attachment of serine to tRNA(Ser). Is also able to aminoacylate tRNA(Sec) with serine, to form the misacylated tRNA L-seryl-tRNA(Sec), which will be further converted into selenocysteinyl-tRNA(Sec). This chain is Serine--tRNA ligase, found in Acidiphilium cryptum (strain JF-5).